An 89-amino-acid chain; its full sequence is ATP synthase subunit e, mitochondrial (89 aa).

Serine 1 carries the N-acetylserine modification. A helical transmembrane segment spans residues 8-25 (YSSLAAGIVYGAYHTYTL).

F-type ATP synthases have 2 components, the catalytic core F(1) and the membrane-embedded component F(0), linked together by a central stalk and a peripheral stalk. The central stalk, also called rotor shaft, is often seen as part of F(1). The peripheral stalk is seen as part of F(0). F(0) contains the membrane channel next to the rotor. F-type ATP synthases form dimers but each monomer functions independently in ATP generation. The dimer consists of 18 different polypeptides: ATP1 (subunit alpha, part of F(1), 3 molecules per monomer), ATP2 (subunit beta, part of F(1), 3 molecules per monomer), ATP3 (subunit gamma, part of the central stalk), ATP4 (subunit b, part of the peripheral stalk), ATP5/OSCP (subunit 5/OSCP, part of the peripheral stalk), ATP6 (subunit a, part of the peripheral stalk), ATP7 (subunit d, part of the peripheral stalk), ATP8 (subunit 8, part of the peripheral stalk), OLI1 (subunit c, part of the rotor, 10 molecules per monomer), ATP14 (subunit h, part of the peripheral stalk), ATP15 (subunit epsilon, part of the central stalk), ATP16 (subunit delta, part of the central stalk), ATP17 (subunit f, part of the peripheral stalk), ATP18 (subunit i/j, part of the peripheral stalk). Dimer-specific subunits are ATP19 (subunit k, at interface between monomers), ATP20 (subunit g, at interface between monomers), TIM11 (subunit e, at interface between monomers). Also contains subunit L.

It localises to the mitochondrion inner membrane. In terms of biological role, mitochondrial membrane ATP synthase (F(1)F(0) ATP synthase or Complex V) produces ATP from ADP in the presence of a proton gradient across the membrane which is generated by electron transport complexes of the respiratory chain. F-type ATP synthases consist of two structural domains, F(1) - containing the extramembraneous catalytic core, and F(0) - containing the membrane proton channel, linked together by a central stalk and a peripheral stalk. During catalysis, ATP synthesis in the catalytic domain of F(1) is coupled via a rotary mechanism of the central stalk subunits to proton translocation. Part of the complex F(0) domain. Minor subunit located with subunit a/ATP6 in the membrane. Together with subunit g/ATP20, probably contributes to membrane curvature at the site of the ATP synthase dimer, ultimately contributing to formation of cristae. The chain is ATP synthase subunit e, mitochondrial from Pichia angusta (Yeast).